The sequence spans 442 residues: Putative neutral sphingomyelinase (442 aa).

Glu-46 lines the Mg(2+) pocket. His-264 (proton acceptor) is an active-site residue. The tract at residues 309 to 330 (ALTGEDDQSSQHQPEIQCNGSS) is disordered. The span at 318–330 (SQHQPEIQCNGSS) shows a compositional bias: polar residues. 2 consecutive transmembrane segments (helical) span residues 362 to 384 (RILY…EFTA) and 391 to 413 (IFLL…ASIW).

The protein belongs to the neutral sphingomyelinase family.

It localises to the membrane. The catalysed reaction is a sphingomyelin + H2O = phosphocholine + an N-acylsphing-4-enine + H(+). It functions in the pathway lipid metabolism; sphingolipid metabolism. This Drosophila melanogaster (Fruit fly) protein is Putative neutral sphingomyelinase.